A 186-amino-acid polypeptide reads, in one-letter code: Small ribosomal subunit protein uS5 (186 aa).

One can recognise an S5 DRBM domain in the interval 20 to 83 (FVDKLVHINR…EAAKRDMIFV (64 aa)).

This sequence belongs to the universal ribosomal protein uS5 family. In terms of assembly, part of the 30S ribosomal subunit. Contacts proteins S4 and S8.

Its function is as follows. With S4 and S12 plays an important role in translational accuracy. Functionally, located at the back of the 30S subunit body where it stabilizes the conformation of the head with respect to the body. The protein is Small ribosomal subunit protein uS5 of Brucella ovis (strain ATCC 25840 / 63/290 / NCTC 10512).